Reading from the N-terminus, the 59-residue chain is Putative HTH-type transcriptional regulator YneL (59 aa).

In terms of domain architecture, HTH araC/xylS-type spans Met1–Gly59. The H-T-H motif DNA-binding region spans Val26–Leu49.

The sequence is that of Putative HTH-type transcriptional regulator YneL (yneL) from Escherichia coli (strain K12).